A 313-amino-acid polypeptide reads, in one-letter code: MTEFKHETVLLKEATAALAVKPAGIYVDATLGRGGHTRQILNQLTTGRLIAFDQDEAAIATVTADFGTLPKQLTLVHRNFRDLTDALTTLGITEVDGILYDLGVSSPQFDDSKRGFSYRFDAPLDMRMDQRQTLDAKTIVNEWPYADLVRIFSRYGEEHFSKQIARRIEQARTVQPITTTFQLVELIKAGIPAKARRTGGHPAKKVFQAIRIAVNDELSALESSLEQALKLINVGGRISVITFQSLEDRLVKTMFKEVSSVQDVPRGLPVIPASAQPNYRLVNRKPILPSEEELAVNHRAHSAKLRVIEKIHD.

S-adenosyl-L-methionine contacts are provided by residues 34–36, aspartate 53, phenylalanine 80, aspartate 101, and glutamine 108; that span reads GGH.

Belongs to the methyltransferase superfamily. RsmH family.

It localises to the cytoplasm. The catalysed reaction is cytidine(1402) in 16S rRNA + S-adenosyl-L-methionine = N(4)-methylcytidine(1402) in 16S rRNA + S-adenosyl-L-homocysteine + H(+). Functionally, specifically methylates the N4 position of cytidine in position 1402 (C1402) of 16S rRNA. The sequence is that of Ribosomal RNA small subunit methyltransferase H from Lacticaseibacillus casei (strain BL23) (Lactobacillus casei).